The primary structure comprises 126 residues: Holo-[acyl-carrier-protein] synthase (126 aa).

2 residues coordinate Mg(2+): aspartate 8 and glutamate 56.

Belongs to the P-Pant transferase superfamily. AcpS family. The cofactor is Mg(2+).

The protein resides in the cytoplasm. The enzyme catalyses apo-[ACP] + CoA = holo-[ACP] + adenosine 3',5'-bisphosphate + H(+). Transfers the 4'-phosphopantetheine moiety from coenzyme A to a Ser of acyl-carrier-protein. The polypeptide is Holo-[acyl-carrier-protein] synthase (Clostridium tetani (strain Massachusetts / E88)).